We begin with the raw amino-acid sequence, 358 residues long: Ion-translocating oxidoreductase complex subunit D (358 aa).

4 helical membrane-spanning segments follow: residues 19–39, 41–61, 79–99, and 125–145; these read IMLW…YYFG, GVVL…FIAI, LTAL…IIII, and IGYV…MPPI. At Thr186 the chain carries FMN phosphoryl threonine. Transmembrane regions (helical) follow at residues 220–240, 248–268, 271–291, 297–317, and 321–341; these read FAQG…FLIL, IPVA…FTGF, LSAI…FIAT, SITP…VYLI, and GNYP…VPLI.

It belongs to the NqrB/RnfD family. In terms of assembly, the complex is composed of six subunits: RnfA, RnfB, RnfC, RnfD, RnfE and RnfG. The cofactor is FMN.

The protein resides in the cell inner membrane. Functionally, part of a membrane-bound complex that couples electron transfer with translocation of ions across the membrane. This chain is Ion-translocating oxidoreductase complex subunit D, found in Haemophilus influenzae (strain 86-028NP).